The chain runs to 416 residues: MKIYLVGGAVRDQLLGLPVKDRDWIVVGADPATLLSLGYQQVGKDFPVFLNPKTKEEYALARTERKSSTGYTGFICDFSPTITLEQDLIRRDLTINAMAQSEDGEIIDPYGGKQDLENRILRHISPAFSEDPLRVLRVARFAARYHSLGFKIASETLALMAELAQSGELQHLTAERVWLETEKALNEKNPEIYFETLHKTGALSVLFSEIDALHGVPNPVKHHPEVDSFIHTMLVLKQAVNLTENNPILNKSAVRFAAICHDLGKALTPQNILPHHYGHEQAGIKPTRSLCKRLKVPSYFQELAELTCEFHTHIHKAFELRAETVITLFNRFDVWRKSQRFQEFLQVCLADTRGRTGFENKDYPQIDYINQLLHAANEVDVQQVIADGFEKQAIKNELTKRRILAVKQTKTNYPTN.

The ATP site is built by Gly8 and Arg11. CTP contacts are provided by Gly8 and Arg11. Mg(2+)-binding residues include Asp21 and Asp23. Residues Arg91, Arg137, and Arg140 each contribute to the ATP site. Residues Arg91, Arg137, and Arg140 each contribute to the CTP site. The 108-residue stretch at 228–335 (SFIHTMLVLK…ITLFNRFDVW (108 aa)) folds into the HD domain.

This sequence belongs to the tRNA nucleotidyltransferase/poly(A) polymerase family. Bacterial CCA-adding enzyme type 1 subfamily. Monomer. Can also form homodimers and oligomers. Requires Mg(2+) as cofactor. The cofactor is Ni(2+).

It carries out the reaction a tRNA precursor + 2 CTP + ATP = a tRNA with a 3' CCA end + 3 diphosphate. The catalysed reaction is a tRNA with a 3' CCA end + 2 CTP + ATP = a tRNA with a 3' CCACCA end + 3 diphosphate. Catalyzes the addition and repair of the essential 3'-terminal CCA sequence in tRNAs without using a nucleic acid template. Adds these three nucleotides in the order of C, C, and A to the tRNA nucleotide-73, using CTP and ATP as substrates and producing inorganic pyrophosphate. tRNA 3'-terminal CCA addition is required both for tRNA processing and repair. Also involved in tRNA surveillance by mediating tandem CCA addition to generate a CCACCA at the 3' terminus of unstable tRNAs. While stable tRNAs receive only 3'-terminal CCA, unstable tRNAs are marked with CCACCA and rapidly degraded. This Haemophilus influenzae (strain PittGG) protein is Multifunctional CCA protein.